Reading from the N-terminus, the 350-residue chain is Protein disulfide isomerase Creld2 (350 aa).

A signal peptide spans 1–22 (MHLLLAAAFGLLLLLPPPGAVA). The short motif at 29-32 (CQRC) is the CXXC element. 4 disulfides stabilise this stretch: C29-C32, C138-C152, C146-C164, and C166-C175. One can recognise an EGF-like 1 domain in the interval 134–176 (DCQECQGGSERPCSGNGYCSGDGSRQGDGSCQCHTGYKGPLCI). An FU 1 repeat occupies 191-238 (HSICSACDESCKTCSGPSNKDCIQCEVGWARVEDACVDVDECAAETSP). N-linked (GlcNAc...) asparagine glycosylation occurs at N249. Residues 251–298 (SYTCEDCDSTCVGCTGKGPANCKECIAGYTKESGQCTDIDECSLEEKA) form an FU 2 repeat. Positions 261 to 264 (CVGC) match the CXXC motif. Disulfide bonds link C261-C264, C292-C306, C299-C315, and C317-C328. The EGF-like 2; calcium-binding domain occupies 288–329 (DIDECSLEEKACKRKNENCYNVPGSFVCVCPEGFEETEDACV).

It belongs to the CRELD family. As to quaternary structure, interacts with CHRNA4. Component of a complex containing at least CRELD2, MANF, MATN3 and PDIA4. Expressed in chondrocytes (at protein level).

It localises to the endoplasmic reticulum. The catalysed reaction is Catalyzes the rearrangement of -S-S- bonds in proteins.. Protein disulfide isomerase. Might play a role in the unfolded protein response. May regulate transport of alpha4-beta2 neuronal acetylcholine receptor. The polypeptide is Protein disulfide isomerase Creld2 (Creld2) (Mus musculus (Mouse)).